A 205-amino-acid chain; its full sequence is MSDQLFERTMAFAGILQAVAQVQYIARHGDSDKDALAASLNSVLVTNPDSTSEVYADKEALKKGYQMIVAQLGDGKQKDVEVTRYLVGILALERKLARSANAMGMLSERINQIHRQLSHFEITDEQVIANFAGIYSDIVSELGPKLQISGNPEFLKRTQTQQKIRALLLSAMRSAVLWRQLGGKRRHLVFARKTIVDTAMKSLTL.

This sequence belongs to the HflD family.

The protein resides in the cytoplasm. Its subcellular location is the cell inner membrane. This Shewanella piezotolerans (strain WP3 / JCM 13877) protein is High frequency lysogenization protein HflD homolog.